Here is a 548-residue protein sequence, read N- to C-terminus: MAAKDVKFGNDARVKMLRGVNVLADAVKVTLGPKGRNVVLDKSFGAPTITKDGVSVAREIELEDKFENMGAQMVKEVASKANDAAGDGTTTATVLAQAIVNEGLKAVAAGMNPMDLKRGIDKAVLAAVEELKALSVPCSDSKAIAQVGTISANSDETVGKLIAEAMDKVGKEGVITVEDGTGLEDELDVVEGMQFDRGYLSPYFINKPDTGAVELESPFILLADKKISNIREMLPVLEAVAKAGKPLVIIAEDVEGEALATLVVNTMRGIVKVAAVKAPGFGDRRKAMLQDIATLTGGTVISEEIGMELEKATLEDLGQAKRVVINKDTTTIIDGVGEESAIQGRVAQIRKQIEEATSDYDREKLQERVAKLAGGVAVIKVGAATEVEMKEKKARVDDALHATRAAVEEGVVAGGGVALVRVAAKLAGLTGQNEDQNVGIKVALRAMEAPLRQIVSNAGEEPSVVANNVKAGDGNYGYNAATEEYGNMIDFGILDPTKVTRSALQYAASVAGLMITTECMVTDLPKGDAPDLGAAGGMGGMGGMGGMM.

ATP contacts are provided by residues 30–33, lysine 51, 87–91, glycine 415, 479–481, and aspartate 495; these read TLGP, DGTTT, and NAA.

The protein belongs to the chaperonin (HSP60) family. In terms of assembly, forms a cylinder of 14 subunits composed of two heptameric rings stacked back-to-back. Interacts with the co-chaperonin GroES.

The protein resides in the cytoplasm. The catalysed reaction is ATP + H2O + a folded polypeptide = ADP + phosphate + an unfolded polypeptide.. In terms of biological role, together with its co-chaperonin GroES, plays an essential role in assisting protein folding. The GroEL-GroES system forms a nano-cage that allows encapsulation of the non-native substrate proteins and provides a physical environment optimized to promote and accelerate protein folding. This is Chaperonin GroEL from Klebsiella pneumoniae subsp. pneumoniae (strain ATCC 700721 / MGH 78578).